The following is a 155-amino-acid chain: Small ribosomal subunit protein uS7c (155 aa).

This sequence belongs to the universal ribosomal protein uS7 family. In terms of assembly, part of the 30S ribosomal subunit.

Its subcellular location is the plastid. It is found in the chloroplast. One of the primary rRNA binding proteins, it binds directly to 16S rRNA where it nucleates assembly of the head domain of the 30S subunit. This is Small ribosomal subunit protein uS7c (rps7) from Euonymus alatus (Burning bush).